The chain runs to 262 residues: Small ribosomal subunit protein eS1 (262 aa).

Positions 234-251 (DPKEDSGKNVKSLPESKE) are enriched in basic and acidic residues. Residues 234–262 (DPKEDSGKNVKSLPESKEATNILTAELKH) form a disordered region.

This sequence belongs to the eukaryotic ribosomal protein eS1 family. In terms of assembly, component of the small ribosomal subunit. Mature ribosomes consist of a small (40S) and a large (60S) subunit. The 40S subunit contains about 33 different proteins and 1 molecule of RNA (18S). The 60S subunit contains about 49 different proteins and 3 molecules of RNA (25S, 5.8S and 5S).

It is found in the cytoplasm. The chain is Small ribosomal subunit protein eS1 from Plasmodium yoelii yoelii.